A 126-amino-acid chain; its full sequence is Large ribosomal subunit protein bL12 (126 aa).

Belongs to the bacterial ribosomal protein bL12 family. As to quaternary structure, homodimer. Part of the ribosomal stalk of the 50S ribosomal subunit. Forms a multimeric L10(L12)X complex, where L10 forms an elongated spine to which 2 to 4 L12 dimers bind in a sequential fashion. Binds GTP-bound translation factors.

Functionally, forms part of the ribosomal stalk which helps the ribosome interact with GTP-bound translation factors. Is thus essential for accurate translation. In Acidobacterium capsulatum (strain ATCC 51196 / DSM 11244 / BCRC 80197 / JCM 7670 / NBRC 15755 / NCIMB 13165 / 161), this protein is Large ribosomal subunit protein bL12.